The sequence spans 932 residues: Lipoxygenase 2.2, chloroplastic (932 aa).

A PLAT domain is found at 79–219; that stretch reads MKATVSVHMK…CSPDKRTFFP (141 aa). The 710-residue stretch at 223–932 folds into the Lipoxygenase domain; the sequence is SYIPSQTPKG…EMGIPNSISI (710 aa). Residues 270 to 284 show a composition bias toward basic and acidic residues; the sequence is PESKRPVLGGKEHPY. The disordered stretch occupies residues 270–311; that stretch reads PESKRPVLGGKEHPYPRRCRTGRPRSKTDPSSEEESHKKGEM. The span at 285-294 shows a compositional bias: basic residues; it reads PRRCRTGRPR. Residues 295 to 311 show a composition bias toward basic and acidic residues; that stretch reads SKTDPSSEEESHKKGEM. Residues His588, His593, His778, Asn782, and Ile932 each coordinate Fe cation.

This sequence belongs to the lipoxygenase family. Requires Fe cation as cofactor.

It is found in the plastid. The protein resides in the chloroplast. It carries out the reaction (9Z,12Z)-octadecadienoate + O2 = (13S)-hydroperoxy-(9Z,11E)-octadecadienoate. It catalyses the reaction (9Z,12Z,15Z)-octadecatrienoate + O2 = (13S)-hydroperoxy-(9Z,11E,15Z)-octadecatrienoate. The protein operates within lipid metabolism; oxylipin biosynthesis. In terms of biological role, plant lipoxygenase may be involved in a number of diverse aspects of plant physiology including growth and development, pest resistance, and senescence or responses to wounding. This enzyme exhibits linoleate 13-lipoxygenase activity. This chain is Lipoxygenase 2.2, chloroplastic (LOX2.2), found in Hordeum vulgare (Barley).